Here is a 77-residue protein sequence, read N- to C-terminus: Delta/omega-plectoxin-Pt1a (77 aa).

The N-terminal stretch at 1-20 is a signal peptide; that stretch reads MKHLIVAVVLLSALAICTSA. Positions 21–34 are excised as a propeptide; that stretch reads EEEQVNVPFRPEER. 5 disulfides stabilise this stretch: cysteine 38-cysteine 51, cysteine 45-cysteine 57, cysteine 50-cysteine 67, cysteine 54-cysteine 74, and cysteine 59-cysteine 65. Residue serine 73 is the site of O-palmitoyl serine attachment. Cysteine 74 is modified (cysteine amide).

The protein belongs to the neurotoxin 02 (plectoxin) family. 01 (Tx3) subfamily. As to expression, expressed by the venom gland.

The protein resides in the secreted. Its function is as follows. Excitatory toxin that acts on both calcium and sodium (Nav) channels. It preferentially blocks a subset of calcium channels that is apparently not required for neurotransmitter release, it decreases threshold for sodium channel activation and it slows sodium channel inactivation. As it enhances synaptic transmission by prolonging presynaptic release of neurotransmitter, its effects on sodium and calcium channels may act synergistically to sustain the terminal excitability. This chain is Delta/omega-plectoxin-Pt1a, found in Plectreurys tristis (Spider).